The following is a 257-amino-acid chain: uncharacterized protein (257 aa).

Disordered stretches follow at residues 86–119 and 182–206; these read SDEEGDNRPLPTPLVEEDNRPPTPLPEEDDRPLS and STPLGTEESRPQAKPTPTSQLTDGQ. Residues 196–206 are compositionally biased toward polar residues; that stretch reads PTPTSQLTDGQ.

This is an uncharacterized protein from Invertebrate iridescent virus 3 (IIV-3).